The primary structure comprises 311 residues: Bifunctional pinoresinol-lariciresinol reductase (311 aa).

Residues Gly-10–Gly-16, Arg-35, and Lys-44 contribute to the NADP(+) site. The Proton acceptor role is filled by Lys-138. Residue Arg-142 coordinates NADP(+). Substrate is bound at residue His-270.

This sequence belongs to the NmrA-type oxidoreductase family. Isoflavone reductase subfamily. Dimer. Expressed in rhizomes, stems, and leaves.

The catalysed reaction is (-)-secoisolariciresinol + NADP(+) = (+)-lariciresinol + NADPH + H(+). The enzyme catalyses (+)-lariciresinol + NADP(+) = (+)-pinoresinol + NADPH + H(+). Its pathway is aromatic compound metabolism; phenylpropanoid biosynthesis. Functionally, reductase involved in lignan biosynthesis. Also involved in the biosynthesis of etoposide, a chemotherapeutic compound of the topoisomerase inhibitor family. Catalyzes the enantioselective sequential conversion of (+)-pinoresinol into (+)-lariciresinol and of (+)-lariciresinol into (-)-secoisolariciresinol. Abstracts the 4R-hydride from the NADPH cofactor during catalysis. The sequence is that of Bifunctional pinoresinol-lariciresinol reductase from Sinopodophyllum hexandrum (Himalayan may apple).